Consider the following 194-residue polypeptide: Putative 3-methyladenine DNA glycosylase (194 aa).

Belongs to the DNA glycosylase MPG family.

In Chlamydia felis (strain Fe/C-56) (Chlamydophila felis), this protein is Putative 3-methyladenine DNA glycosylase.